Here is a 456-residue protein sequence, read N- to C-terminus: Exodeoxyribonuclease 7 large subunit (456 aa).

This sequence belongs to the XseA family. Heterooligomer composed of large and small subunits.

It is found in the cytoplasm. It catalyses the reaction Exonucleolytic cleavage in either 5'- to 3'- or 3'- to 5'-direction to yield nucleoside 5'-phosphates.. Functionally, bidirectionally degrades single-stranded DNA into large acid-insoluble oligonucleotides, which are then degraded further into small acid-soluble oligonucleotides. The protein is Exodeoxyribonuclease 7 large subunit of Shigella boydii serotype 4 (strain Sb227).